The following is a 121-amino-acid chain: Nitrogen fixation nifHD region glnB-like protein 2 (121 aa).

It belongs to the P(II) protein family.

In terms of biological role, could be involved in the regulation of nitrogen fixation. This is Nitrogen fixation nifHD region glnB-like protein 2 (glnBII) from Methanococcus maripaludis (Methanococcus deltae).